Here is a 342-residue protein sequence, read N- to C-terminus: RNA 3'-terminal phosphate cyclase (342 aa).

ATP is bound by residues glutamine 103 and 283–287 (YLADQ). The Tele-AMP-histidine intermediate role is filled by histidine 308.

The protein belongs to the RNA 3'-terminal cyclase family. Type 1 subfamily.

The protein localises to the cytoplasm. The catalysed reaction is a 3'-end 3'-phospho-ribonucleotide-RNA + ATP = a 3'-end 2',3'-cyclophospho-ribonucleotide-RNA + AMP + diphosphate. Functionally, catalyzes the conversion of 3'-phosphate to a 2',3'-cyclic phosphodiester at the end of RNA. The mechanism of action of the enzyme occurs in 3 steps: (A) adenylation of the enzyme by ATP; (B) transfer of adenylate to an RNA-N3'P to produce RNA-N3'PP5'A; (C) and attack of the adjacent 2'-hydroxyl on the 3'-phosphorus in the diester linkage to produce the cyclic end product. The biological role of this enzyme is unknown but it is likely to function in some aspects of cellular RNA processing. The polypeptide is RNA 3'-terminal phosphate cyclase (rtcA) (Escherichia coli O157:H7).